Consider the following 100-residue polypeptide: NADH-quinone oxidoreductase subunit K (100 aa).

3 consecutive transmembrane segments (helical) span residues 4–24 (TSYY…GVLI), 29–49 (LVLF…LVTF), and 60–80 (IVVF…LALL).

Belongs to the complex I subunit 4L family. NDH-1 is composed of 14 different subunits. Subunits NuoA, H, J, K, L, M, N constitute the membrane sector of the complex.

Its subcellular location is the cell membrane. It catalyses the reaction a quinone + NADH + 5 H(+)(in) = a quinol + NAD(+) + 4 H(+)(out). In terms of biological role, NDH-1 shuttles electrons from NADH, via FMN and iron-sulfur (Fe-S) centers, to quinones in the respiratory chain. The immediate electron acceptor for the enzyme in this species is believed to be ubiquinone. Couples the redox reaction to proton translocation (for every two electrons transferred, four hydrogen ions are translocated across the cytoplasmic membrane), and thus conserves the redox energy in a proton gradient. The sequence is that of NADH-quinone oxidoreductase subunit K from Roseiflexus sp. (strain RS-1).